The chain runs to 276 residues: Ribosomal RNA small subunit methyltransferase A (276 aa).

Positions 15, 17, 42, 64, 89, and 108 each coordinate S-adenosyl-L-methionine.

Belongs to the class I-like SAM-binding methyltransferase superfamily. rRNA adenine N(6)-methyltransferase family. RsmA subfamily.

The protein localises to the cytoplasm. The catalysed reaction is adenosine(1518)/adenosine(1519) in 16S rRNA + 4 S-adenosyl-L-methionine = N(6)-dimethyladenosine(1518)/N(6)-dimethyladenosine(1519) in 16S rRNA + 4 S-adenosyl-L-homocysteine + 4 H(+). Its function is as follows. Specifically dimethylates two adjacent adenosines (A1518 and A1519) in the loop of a conserved hairpin near the 3'-end of 16S rRNA in the 30S particle. May play a critical role in biogenesis of 30S subunits. This chain is Ribosomal RNA small subunit methyltransferase A, found in Prochlorococcus marinus (strain MIT 9312).